Reading from the N-terminus, the 495-residue chain is Prenylcysteine oxidase 1-like (495 aa).

An N-terminal signal peptide occupies residues 1–22 (MARAAPLLAVLATVLTTAAAGG). 2 N-linked (GlcNAc...) asparagine glycosylation sites follow: N185 and N343.

This sequence belongs to the prenylcysteine oxidase family. It depends on FAD as a cofactor.

The protein localises to the secreted. In terms of biological role, likely to have oxidoreductase activity. Required in the mevalonate pathway to regulate prenylation and enhances the bactericidal activity of neutrophils. The chain is Prenylcysteine oxidase 1-like (Pcyox1l) from Mus musculus (Mouse).